The following is a 299-amino-acid chain: 4-diphosphocytidyl-2-C-methyl-D-erythritol kinase (299 aa).

Residue Lys11 is part of the active site. ATP is bound at residue 94-104; it reads PQGGGLGGGSS. The active site involves Asp136.

It belongs to the GHMP kinase family. IspE subfamily.

The enzyme catalyses 4-CDP-2-C-methyl-D-erythritol + ATP = 4-CDP-2-C-methyl-D-erythritol 2-phosphate + ADP + H(+). Its pathway is isoprenoid biosynthesis; isopentenyl diphosphate biosynthesis via DXP pathway; isopentenyl diphosphate from 1-deoxy-D-xylulose 5-phosphate: step 3/6. Functionally, catalyzes the phosphorylation of the position 2 hydroxy group of 4-diphosphocytidyl-2C-methyl-D-erythritol. The protein is 4-diphosphocytidyl-2-C-methyl-D-erythritol kinase of Bordetella bronchiseptica (strain ATCC BAA-588 / NCTC 13252 / RB50) (Alcaligenes bronchisepticus).